We begin with the raw amino-acid sequence, 64 residues long: Kappa-lycotoxin-Os1a (64 aa).

4 cysteine pairs are disulfide-bonded: C10-C26, C17-C56, C19-C42, and C28-C40.

Belongs to the neurotoxin 04 (omega-agtx) family. 01 (type I omega-agtx) subfamily. As to expression, expressed by the venom gland.

The protein localises to the secreted. Its function is as follows. Insecticidal to house crickets. It induces an excitatory slow-onset impact that leads to irreversible spastic paralysis. It also modifies human voltage-gated potassium channel Kv1.5/KCNA5. Most likely, it binds to the voltage-sensing domain of the channel, suggesting it does not block the pore but prevents its opening at physiological membrane potentials. The recombinant peptide binds to the channel in an irreversible manner and slows down the hKv1.5 current activation kinetics. It is not toxic to mice, when intracranially injected (at 0.5 ug/g mouse). This chain is Kappa-lycotoxin-Os1a, found in Oculicosa supermirabilis (Central Asian wolf-spider).